Reading from the N-terminus, the 448-residue chain is MSLIASIYAREVLDSRGNPTVEAEVYSEDGFFGRGIVPSGASTGEHEAVELRDGDKSRYLGKGVTKAVANVNGAIAEALIGKFDVADQRGIDLAMIALDGTPNKGKLGANAILSVSIATARAAAEEAGLPLYQYLGGPNSYVLPTPMMNVINGGVHSDNKVDFQEFMIMPVGAKTVKEAIRMGSETFHNLKKLLEADGKNTSVGDEGGFAPDFANNEEPLQYLVKAIQAAGYKPGKDIALATDVAASELYDADTKKYKLKWSTGEEFTAPEFEKYIEGLVAKYPIVSVEDPLDENEWDDWVEVTKELGKKVQIVGDDFFVTNTDYLKRGIEMGAANAILIKLNQIGTLTETFEAIEMAKEAGYTAIVSHRSGETEDTTIADLVVATNAGQIKTGSMSRTDRIAKYNQLMRIEDELNQGEPEGVSIYKGINSFYNLNADAKKEIQSHQG.

Gln164 contributes to the (2R)-2-phosphoglycerate binding site. Glu206 acts as the Proton donor in catalysis. Residues Asp243, Glu289, and Asp316 each contribute to the Mg(2+) site. (2R)-2-phosphoglycerate-binding residues include Lys341, Arg370, Ser371, and Lys392. Lys341 functions as the Proton acceptor in the catalytic mechanism.

Belongs to the enolase family. The cofactor is Mg(2+).

The protein localises to the cytoplasm. It localises to the secreted. The protein resides in the cell surface. It carries out the reaction (2R)-2-phosphoglycerate = phosphoenolpyruvate + H2O. Its pathway is carbohydrate degradation; glycolysis; pyruvate from D-glyceraldehyde 3-phosphate: step 4/5. Functionally, catalyzes the reversible conversion of 2-phosphoglycerate (2-PG) into phosphoenolpyruvate (PEP). It is essential for the degradation of carbohydrates via glycolysis. This is Enolase from Oenococcus oeni (strain ATCC BAA-331 / PSU-1).